Consider the following 370-residue polypeptide: Platelet-derived growth factor D (370 aa).

An N-terminal signal peptide occupies residues 1–23; that stretch reads MQRLVLVSILLCANFSCYPDTFA. The region spanning 52-170 is the CUB domain; that stretch reads REENIQVTSN…PGFKIYYSFV (119 aa). A disulfide bridge links Cys-109 with Cys-131. Asn-276 carries N-linked (GlcNAc...) asparagine glycosylation. Disulfide bonds link Cys-302-Cys-360 and Cys-306-Cys-362.

It belongs to the PDGF/VEGF growth factor family. As to quaternary structure, homodimer; disulfide-linked. Interacts with PDGFRB homodimers, and with heterodimers formed by PDGFRA and PDGFRB. Activated by proteolytic cleavage. Proteolytic removal of the N-terminal CUB domain releasing the core domain is necessary for unmasking the receptor-binding epitopes of the core domain. Cleavage after Arg-247 or Arg-249 by urokinase plasminogen activator gives rise to the active form. As to expression, expressed at high levels in developing heart, lung, kidney and some muscle derivatives. Moderately expressed in liver, brain and testis. In the kidney, localized to glomerular mesangial cells and vascular smooth muscle cells. Up-regulated in areas of renal fibrosis. In mice with unilateral ureteral obstruction, expressed in interstitial cells at day 4, with an increased to maximal expression at day 14.

Its subcellular location is the secreted. Functionally, growth factor that plays an essential role in the regulation of embryonic development, cell proliferation, cell migration, survival and chemotaxis. Potent mitogen for cells of mesenchymal origin. Plays an important role in wound healing. Has oncogenic potential and can induce tumor formation. Induces macrophage recruitment, increased interstitial pressure, and blood vessel maturation during angiogenesis. Can initiate events that lead to a mesangial proliferative glomerulonephritis, including influx of monocytes and macrophages and production of extracellular matrix. This chain is Platelet-derived growth factor D (Pdgfd), found in Mus musculus (Mouse).